Consider the following 358-residue polypeptide: Programmed cell death protein 2-like (358 aa).

Residue alanine 2 is modified to N-acetylalanine. A Phosphoserine modification is found at serine 20. Phosphothreonine is present on threonine 22.

Higher expression in lung, colon, mammary gland, cervix, stomach and small intestine.

Over-expression suppresses AP1, CREB, NFAT, and NF-kB transcriptional activation, and delays cell cycle progression at S phase. This is Programmed cell death protein 2-like (PDCD2L) from Homo sapiens (Human).